A 502-amino-acid chain; its full sequence is Zinc finger C3HC-type protein 1 (502 aa).

N-acetylalanine is present on Ala2. Residue Ser24 is modified to Phosphoserine. Thr28 bears the Phosphothreonine mark. Positions 36 to 73 (IDEGIAPEEGGVDAKDTSATSQSVNGSPQAEQPSLEST) are disordered. The segment covering 52 to 72 (TSATSQSVNGSPQAEQPSLES) has biased composition (polar residues). Ser58 and Ser62 each carry phosphoserine. Thr84 is modified (phosphothreonine). The segment at 102–156 (CAKYGWVTVECDMLKCSSCQAFLCASLQPAFDFDRYKQRCAELKKALCTAHEKFC) adopts a C3HC-type zinc-finger fold. An F-box-like region spans residues 170–210 (LPLDEPAILVSEFLDRFQSLCHLDLQLPSLRPEDLKTMCLT). A disordered region spans residues 302–423 (SSPIPGLEGR…SSRSFFDPTS (122 aa)). Ser321 and Ser329 each carry phosphoserine. Polar residues predominate over residues 327–338 (TRSQDATFSPGS). Residue Thr333 is modified to Phosphothreonine. Ser335, Ser338, Ser344, Ser354, Ser359, and Ser370 each carry phosphoserine. Residues 351-360 (RTRSWDSSSP) show a composition bias toward polar residues. Residues 371–380 (PTTRTRPVTR) show a composition bias toward low complexity. Ser381 bears the Phosphoserine mark. Residues Thr384 and Thr387 each carry the phosphothreonine modification. Phosphoserine is present on Ser395. Positions 396–402 (PLRKAKR) match the Nuclear localization signal motif. Phosphoserine is present on residues Ser407 and Ser483. The span at 407 to 422 (SSSSSDTSSRSFFDPT) shows a compositional bias: low complexity.

Interacts with TPR; this interaction mediates ZC3HC1 nuclear envelopes (NE)-association but also required for proper positioning of a substantial amount of TPR at the nuclear basket (NB). Phosphorylated. May also be weakly phosphorylated on Tyr residues. As to expression, widely expressed. Highly expressed in heart, skeletal muscle and testis. Expressed in brain, placenta, lung, kidney, liver, pancreas, spleen, thymus, prostate, ovary small intestine and colon. Weakly or not expressed in leukocytes.

It localises to the nucleus. The protein localises to the nucleus envelope. Required for proper positioning of a substantial amount of TPR at the nuclear basket (NB) through interaction with TPR. The sequence is that of Zinc finger C3HC-type protein 1 from Homo sapiens (Human).